Reading from the N-terminus, the 150-residue chain is Cytochrome c oxidase subunit 5A, mitochondrial (150 aa).

The transit peptide at 1-41 directs the protein to the mitochondrion; it reads MLGAALRRCAVAATSRAGPRGLLHSAPNPGPAAAIQSVRCY. The short motif at 2-17 is the SIFI-degron element; the sequence is LGAALRRCAVAATSRA. An N6-acetyllysine mark is found at Lys-87 and Lys-113. Thr-141 carries the phosphothreonine modification.

The protein belongs to the cytochrome c oxidase subunit 5A family. Component of the cytochrome c oxidase (complex IV, CIV), a multisubunit enzyme composed of 14 subunits. The complex is composed of a catalytic core of 3 subunits MT-CO1, MT-CO2 and MT-CO3, encoded in the mitochondrial DNA, and 11 supernumerary subunits COX4I, COX5A, COX5B, COX6A, COX6B, COX6C, COX7A, COX7B, COX7C, COX8 and NDUFA4, which are encoded in the nuclear genome. The complex exists as a monomer or a dimer and forms supercomplexes (SCs) in the inner mitochondrial membrane with NADH-ubiquinone oxidoreductase (complex I, CI) and ubiquinol-cytochrome c oxidoreductase (cytochrome b-c1 complex, complex III, CIII), resulting in different assemblies (supercomplex SCI(1)III(2)IV(1) and megacomplex MCI(2)III(2)IV(2)). Interacts with AFG1L. Interacts with RAB5IF. In terms of processing, in response to mitochondrial stress, the precursor protein is ubiquitinated by the SIFI complex in the cytoplasm before mitochondrial import, leading to its degradation. Within the SIFI complex, UBR4 initiates ubiquitin chain that are further elongated or branched by KCMF1.

The protein resides in the mitochondrion inner membrane. The protein operates within energy metabolism; oxidative phosphorylation. Its function is as follows. Component of the cytochrome c oxidase, the last enzyme in the mitochondrial electron transport chain which drives oxidative phosphorylation. The respiratory chain contains 3 multisubunit complexes succinate dehydrogenase (complex II, CII), ubiquinol-cytochrome c oxidoreductase (cytochrome b-c1 complex, complex III, CIII) and cytochrome c oxidase (complex IV, CIV), that cooperate to transfer electrons derived from NADH and succinate to molecular oxygen, creating an electrochemical gradient over the inner membrane that drives transmembrane transport and the ATP synthase. Cytochrome c oxidase is the component of the respiratory chain that catalyzes the reduction of oxygen to water. Electrons originating from reduced cytochrome c in the intermembrane space (IMS) are transferred via the dinuclear copper A center (CU(A)) of subunit 2 and heme A of subunit 1 to the active site in subunit 1, a binuclear center (BNC) formed by heme A3 and copper B (CU(B)). The BNC reduces molecular oxygen to 2 water molecules using 4 electrons from cytochrome c in the IMS and 4 protons from the mitochondrial matrix. The polypeptide is Cytochrome c oxidase subunit 5A, mitochondrial (COX5A) (Saguinus labiatus (Red-chested mustached tamarin)).